The sequence spans 1089 residues: Platelet-derived growth factor receptor alpha (1089 aa).

Positions 1 to 24 (MGTSHQVFLVLSCLLTGPGLISCQ) are cleaved as a signal peptide. Ig-like C2-type domains are found at residues 25 to 113 (LLLP…SEIE), 117 to 201 (IYIY…FKTS), 202 to 306 (EFNV…KRVT), 319 to 410 (PTFG…FELS), and 414 to 517 (PASI…LKLV). At 25 to 528 (LLLPSILPNE…PTLRSELTVA (504 aa)) the chain is on the extracellular side. Residues N42, N76, N89, N103, and N179 are each glycosylated (N-linked (GlcNAc...) asparagine). A disulfide bond links C49 and C100. 2 disulfide bridges follow: C150–C189 and C235–C290. N353, N359, N458, N468, and N506 each carry an N-linked (GlcNAc...) asparagine glycan. C435 and C501 are joined by a disulfide. A helical transmembrane segment spans residues 529-549 (AAVLVLLVIVIVSLIVLVVIW). Residues 550-1089 (KQKPRYEIRW…SSDLVEDSFL (540 aa)) are Cytoplasmic-facing. Residues Y572 and Y574 each carry the phosphotyrosine; by autocatalysis modification. A Protein kinase domain is found at 593-954 (LVLGRILGSG…HLSEIVENLL (362 aa)). ATP contacts are provided by residues 599 to 607 (LGSGAFGKV) and K627. Phosphotyrosine; by autocatalysis occurs at positions 720, 731, 742, 754, 762, and 768. D818 (proton acceptor) is an active-site residue. Y849, Y988, and Y1018 each carry phosphotyrosine; by autocatalysis. Residues 1018–1089 (YIIPLPDIDP…SSDLVEDSFL (72 aa)) are disordered. Polar residues predominate over residues 1041-1059 (SSQTSEESAIETGSSSSTF). Positions 1065-1089 (ETIEDIDMMDDIGIDSSDLVEDSFL) are enriched in acidic residues.

It belongs to the protein kinase superfamily. Tyr protein kinase family. CSF-1/PDGF receptor subfamily. In terms of assembly, interacts with homodimeric PDGFA, PDGFB and PDGFC, and with heterodimers formed by PDGFA and PDGFB. Monomer in the absence of bound ligand. Interaction with dimeric PDGFA, PDGFB and/or PDGFC leads to receptor dimerization, where both PDGFRA homodimers and heterodimers with PDGFRB are observed. Interacts (tyrosine phosphorylated) with SHB (via SH2 domain). Interacts (tyrosine phosphorylated) with SHF (via SH2 domain). Interacts (tyrosine phosphorylated) with SRC (via SH2 domain). Interacts (tyrosine phosphorylated) with PIK3R1. Interacts (tyrosine phosphorylated) with PLCG1 (via SH2 domain). Interacts (tyrosine phosphorylated) with CRK, GRB2 and GRB7. Interacts with CD248; this interaction promotes PDGF receptor signaling pathway. Post-translationally, ubiquitinated, leading to its internalization and degradation. In terms of processing, autophosphorylated on tyrosine residues upon ligand binding. Autophosphorylation occurs in trans, i.e. one subunit of the dimeric receptor phosphorylates tyrosine residues on the other subunit. Phosphorylation at Tyr-731 and Tyr-742 is important for interaction with PIK3R1. Phosphorylation at Tyr-720 and Tyr-754 is important for interaction with PTPN11. Phosphorylation at Tyr-762 is important for interaction with CRK. Phosphorylation at Tyr-572 and Tyr-574 is important for interaction with SRC and SRC family members. Phosphorylation at Tyr-988 and Tyr-1018 is important for interaction with PLCG1. As to expression, focally expressed in cortical interstitial cells and highly expressed in the interstitium of the papillary region. Also expressed by adventitial cells in arterial vessels. Up-regulated in areas of renal fibrosis. In mice with unilateral ureteral obstruction, expression in cortical interstitial cells becomes prominent at day 4 which increases progressively until day 14.

Its subcellular location is the cell membrane. It is found in the cell projection. It localises to the cilium. The protein resides in the golgi apparatus. It catalyses the reaction L-tyrosyl-[protein] + ATP = O-phospho-L-tyrosyl-[protein] + ADP + H(+). Present in an inactive conformation in the absence of bound ligand. Binding of PDGFA and/or PDGFB leads to dimerization and activation by autophosphorylation on tyrosine residues. Inhibited by imatinib, nilotinib and sorafenib. Tyrosine-protein kinase that acts as a cell-surface receptor for PDGFA, PDGFB and PDGFC and plays an essential role in the regulation of embryonic development, cell proliferation, survival and chemotaxis. Depending on the context, promotes or inhibits cell proliferation and cell migration. Plays an important role in the differentiation of bone marrow-derived mesenchymal stem cells. Required for normal skeleton development and cephalic closure during embryonic development. Required for normal development of the mucosa lining the gastrointestinal tract, and for recruitment of mesenchymal cells and normal development of intestinal villi. Plays a role in cell migration and chemotaxis in wound healing. Plays a role in platelet activation, secretion of agonists from platelet granules, and in thrombin-induced platelet aggregation. Binding of its cognate ligands - homodimeric PDGFA, homodimeric PDGFB, heterodimers formed by PDGFA and PDGFB or homodimeric PDGFC -leads to the activation of several signaling cascades; the response depends on the nature of the bound ligand and is modulated by the formation of heterodimers between PDGFRA and PDGFRB. Phosphorylates PIK3R1, PLCG1, and PTPN11. Activation of PLCG1 leads to the production of the cellular signaling molecules diacylglycerol and inositol 1,4,5-trisphosphate, mobilization of cytosolic Ca(2+) and the activation of protein kinase C. Phosphorylates PIK3R1, the regulatory subunit of phosphatidylinositol 3-kinase, and thereby mediates activation of the AKT1 signaling pathway. Mediates activation of HRAS and of the MAP kinases MAPK1/ERK2 and/or MAPK3/ERK1. Promotes activation of STAT family members STAT1, STAT3 and STAT5A and/or STAT5B. Receptor signaling is down-regulated by protein phosphatases that dephosphorylate the receptor and its down-stream effectors, and by rapid internalization of the activated receptor. The protein is Platelet-derived growth factor receptor alpha (Pdgfra) of Mus musculus (Mouse).